Reading from the N-terminus, the 105-residue chain is Extracellular guanyl-specific ribonuclease Fl1 (105 aa).

2 disulfides stabilise this stretch: cysteine 5-cysteine 101 and cysteine 23-cysteine 82. The active site involves histidine 39. The active-site Proton acceptor is the glutamate 57. Histidine 90 acts as the Proton donor in catalysis.

The protein belongs to the ribonuclease N1/T1 family.

It catalyses the reaction [RNA] containing guanosine + H2O = an [RNA fragment]-3'-guanosine-3'-phosphate + a 5'-hydroxy-ribonucleotide-3'-[RNA fragment].. The protein is Extracellular guanyl-specific ribonuclease Fl1 of Gibberella baccata (Fusarium lateritium).